The chain runs to 1164 residues: DNA-directed RNA polymerase subunit beta (1164 aa).

Belongs to the RNA polymerase beta chain family. The RNAP catalytic core consists of 2 alpha, 1 beta, 1 beta' and 1 omega subunit. When a sigma factor is associated with the core the holoenzyme is formed, which can initiate transcription.

The enzyme catalyses RNA(n) + a ribonucleoside 5'-triphosphate = RNA(n+1) + diphosphate. In terms of biological role, DNA-dependent RNA polymerase catalyzes the transcription of DNA into RNA using the four ribonucleoside triphosphates as substrates. This is DNA-directed RNA polymerase subunit beta from Saccharopolyspora erythraea (strain ATCC 11635 / DSM 40517 / JCM 4748 / NBRC 13426 / NCIMB 8594 / NRRL 2338).